The chain runs to 28 residues: Metallothionein-like protein type 2 LSC210 (28 aa).

Belongs to the metallothionein superfamily. Type 15 family.

Functionally, metallothioneins have a high content of cysteine residues that bind various heavy metals. The polypeptide is Metallothionein-like protein type 2 LSC210 (LSC210) (Brassica napus (Rape)).